The chain runs to 134 residues: Arsenate reductase (134 aa).

Catalysis depends on nucleophile residues Cys11, Cys83, and Cys90. Intrachain disulfides connect Cys11–Cys83 and Cys83–Cys90.

Belongs to the low molecular weight phosphotyrosine protein phosphatase family. Thioredoxin-coupled ArsC subfamily.

It is found in the cytoplasm. The catalysed reaction is arsenate + [thioredoxin]-dithiol + H(+) = arsenite + [thioredoxin]-disulfide + H2O. Its function is as follows. Catalyzes the reduction of arsenate [As(V)] to arsenite [As(III)]. This is Arsenate reductase from Bacillus cereus (strain 03BB102).